A 411-amino-acid polypeptide reads, in one-letter code: Corticotropin-releasing factor receptor 2 (411 aa).

A signal peptide (not cleaved) is located at residues 1-19 (MDAALLLSLLEANCSLALA). Residues 1-108 (MDAALLLSLL…EPILDDKQRK (108 aa)) lie on the Extracellular side of the membrane. Asn-13, Asn-41, Asn-74, Asn-86, and Asn-94 each carry an N-linked (GlcNAc...) asparagine glycan. Disulfide bonds link Cys-14–Cys-50, Cys-40–Cys-83, and Cys-64–Cys-98. A helical transmembrane segment spans residues 109–139 (YDLHYRIALIINYLGHCVSVVALVAAFLLFL). At 140-146 (VLRSIRC) the chain is on the cytoplasmic side. Residues 147–171 (LRNVIHWNLITTFILRNITWFLLQL) form a helical membrane-spanning segment. Residues 172 to 185 (IDHEVHEGNEVWCR) lie on the Extracellular side of the membrane. Cys-184 and Cys-254 are disulfide-bonded. A helical membrane pass occupies residues 186 to 214 (CVTTIFNYFVVTNFFWMFVEGCYLHTAIV). Topologically, residues 215–221 (MTYSTEH) are cytoplasmic. Residues 222-249 (LRKWLFLFIGWCIPCPIIVAWAVGKLYY) traverse the membrane as a helical segment. Residues 250–265 (ENEQCWFGKEPGDLVD) are Extracellular-facing. Residues 266 to 291 (YIYQGPIILVLLINFVFLFNIVRILM) traverse the membrane as a helical segment. At 292–302 (TKLRASTTSET) the chain is on the cytoplasmic side. Residues 303-327 (IQYRKAVKATLVLLPLLGITYMLFF) form a helical membrane-spanning segment. Residues 328–334 (VNPGEDD) lie on the Extracellular side of the membrane. A helical membrane pass occupies residues 335–364 (LSQIVFIYFNSFLQSFQGFFVSVFYCFFNG). Topologically, residues 365–411 (EVRSALRKRWHRWQDHHALRVPVARAMSIPTSPTRISFHSIKQTAAV) are cytoplasmic.

It belongs to the G-protein coupled receptor 2 family. As to quaternary structure, monomer. Interacts (via N-terminal extracellular domain) with CRF, UCN, UCN2 and UCN3. Post-translationally, a N-glycosylation site within the signal peptide impedes its proper cleavage and function. In terms of tissue distribution, predominantly expressed in limbic regions of the brain such as the lateral septum, the entorhinal cortex, the hypothalamic ventromedial nucleus and several amygdaloid nuclei. Also detectable in lung, kidney and heart.

Its subcellular location is the cell membrane. Its function is as follows. G-protein coupled receptor for CRH (corticotropin-releasing factor), UCN (urocortin), UCN2 and UCN3. Has high affinity for UCN. Ligand binding causes a conformation change that triggers signaling via guanine nucleotide-binding proteins (G proteins) and down-stream effectors, such as adenylate cyclase. Promotes the activation of adenylate cyclase, leading to increased intracellular cAMP levels. The chain is Corticotropin-releasing factor receptor 2 (Crhr2) from Rattus norvegicus (Rat).